Consider the following 183-residue polypeptide: ATP-dependent protease subunit HslV (183 aa).

Thr9 is a catalytic residue. Na(+)-binding residues include Ala164, Cys167, and Thr170.

It belongs to the peptidase T1B family. HslV subfamily. As to quaternary structure, a double ring-shaped homohexamer of HslV is capped on each side by a ring-shaped HslU homohexamer. The assembly of the HslU/HslV complex is dependent on binding of ATP.

The protein localises to the cytoplasm. It carries out the reaction ATP-dependent cleavage of peptide bonds with broad specificity.. Allosterically activated by HslU binding. In terms of biological role, protease subunit of a proteasome-like degradation complex believed to be a general protein degrading machinery. The sequence is that of ATP-dependent protease subunit HslV from Hydrogenovibrio crunogenus (strain DSM 25203 / XCL-2) (Thiomicrospira crunogena).